The sequence spans 834 residues: DNA polymerase I, thermostable (834 aa).

Residues 176-262 (KPEQWVDFRA…DLPLEVDLAQ (87 aa)) enclose the 5'-3' exonuclease domain. Residues 412-834 (ERLHRNLLKR…MGEDWLSAKG (423 aa)) are polymerase.

This sequence belongs to the DNA polymerase type-A family.

It catalyses the reaction DNA(n) + a 2'-deoxyribonucleoside 5'-triphosphate = DNA(n+1) + diphosphate. Has 5'-3' exonuclease activity and no 3'-5' exonuclease activity. The chain is DNA polymerase I, thermostable (polA) from Thermus caldophilus.